The chain runs to 551 residues: Hydroxymethylpyrimidine/phosphomethylpyrimidine kinase THI21 (551 aa).

Position 64 (Q64) interacts with 4-amino-5-hydroxymethyl-2-methylpyrimidine.

It in the N-terminal section; belongs to the ThiD family. In the C-terminal section; belongs to the thiaminase-2 family.

It carries out the reaction 4-amino-5-hydroxymethyl-2-methylpyrimidine + ATP = 4-amino-2-methyl-5-(phosphooxymethyl)pyrimidine + ADP + H(+). It catalyses the reaction 4-amino-2-methyl-5-(phosphooxymethyl)pyrimidine + ATP = 4-amino-2-methyl-5-(diphosphooxymethyl)pyrimidine + ADP. It participates in cofactor biosynthesis; thiamine diphosphate biosynthesis; 4-amino-2-methyl-5-diphosphomethylpyrimidine from 5-amino-1-(5-phospho-D-ribosyl)imidazole: step 2/3. Its pathway is cofactor biosynthesis; thiamine diphosphate biosynthesis; 4-amino-2-methyl-5-diphosphomethylpyrimidine from 5-amino-1-(5-phospho-D-ribosyl)imidazole: step 3/3. In terms of biological role, catalyzes the phosphorylation of hydroxymethylpyrimidine phosphate (HMP-P) to HMP-PP, and also probably that of HMP to HMP-P. This Saccharomyces cerevisiae (strain ATCC 204508 / S288c) (Baker's yeast) protein is Hydroxymethylpyrimidine/phosphomethylpyrimidine kinase THI21 (THI21).